Consider the following 249-residue polypeptide: Segregation and condensation protein A (249 aa).

This sequence belongs to the ScpA family. Component of a cohesin-like complex composed of ScpA, ScpB and the Smc homodimer, in which ScpA and ScpB bind to the head domain of Smc. The presence of the three proteins is required for the association of the complex with DNA.

It is found in the cytoplasm. Its function is as follows. Participates in chromosomal partition during cell division. May act via the formation of a condensin-like complex containing Smc and ScpB that pull DNA away from mid-cell into both cell halves. The protein is Segregation and condensation protein A of Oceanobacillus iheyensis (strain DSM 14371 / CIP 107618 / JCM 11309 / KCTC 3954 / HTE831).